We begin with the raw amino-acid sequence, 194 residues long: PLASMODESMATA CALLOSE-BINDING PROTEIN 2 (194 aa).

An N-terminal signal peptide occupies residues 1 to 16; it reads MAPLVLYLLTLLMAGH. Residues cysteine 22 and cysteine 84 are joined by a disulfide bond. N-linked (GlcNAc...) asparagine glycosylation is present at asparagine 85. The segment covering 106–116 has biased composition (low complexity); the sequence is SSASGSSGSGS. Positions 106-140 are disordered; that stretch reads SSASGSSGSGSTTVTPGKNSPKGSNSITTFPGGNS. Polar residues predominate over residues 117–140; it reads TTVTPGKNSPKGSNSITTFPGGNS. Asparagine 154 carries an N-linked (GlcNAc...) asparagine glycan. Residue serine 171 is the site of GPI-anchor amidated serine attachment. The propeptide at 172-194 is removed in mature form; that stretch reads SGFALYYSNNLLLTGFCSLVMML.

In terms of processing, contains two additional disulfide bonds. In terms of tissue distribution, expressed in the shoot apical region and in young leaves but also detected in the laminar and vasculature of mature leaves.

Its subcellular location is the cell membrane. The protein resides in the cell junction. It localises to the plasmodesma. Functionally, able to bind (1-&gt;3)-beta-D-glucans (laminarin). This Arabidopsis thaliana (Mouse-ear cress) protein is PLASMODESMATA CALLOSE-BINDING PROTEIN 2 (PDCB2).